A 125-amino-acid polypeptide reads, in one-letter code: MTGLDEALTRIRFTDTGLVPAIVQQWYTRDVLMMGWMDAEAFRRTMTEGRVTFWSRSRQEYWRKGDSSGNIQFVRGVALDCDGDTLLVTVDQVGAACHTGTYTCFDADPLAPVLGERPESAADGW.

Asp80 contributes to the Mg(2+) binding site. Residue Cys81 coordinates Zn(2+). Positions 82 and 84 each coordinate Mg(2+). Residues Cys97 and Cys104 each coordinate Zn(2+).

This sequence belongs to the PRA-CH family. As to quaternary structure, homodimer. The cofactor is Mg(2+). It depends on Zn(2+) as a cofactor.

The protein localises to the cytoplasm. It catalyses the reaction 1-(5-phospho-beta-D-ribosyl)-5'-AMP + H2O = 1-(5-phospho-beta-D-ribosyl)-5-[(5-phospho-beta-D-ribosylamino)methylideneamino]imidazole-4-carboxamide. Its pathway is amino-acid biosynthesis; L-histidine biosynthesis; L-histidine from 5-phospho-alpha-D-ribose 1-diphosphate: step 3/9. Catalyzes the hydrolysis of the adenine ring of phosphoribosyl-AMP. This Leifsonia xyli subsp. xyli (strain CTCB07) protein is Phosphoribosyl-AMP cyclohydrolase.